The sequence spans 307 residues: Small ribosomal subunit biogenesis GTPase RsgA (307 aa).

Positions 1–20 are disordered; it reads MPSEHPFSDGISTPNPKETM. Over residues 10–20 the composition is skewed to polar residues; it reads GISTPNPKETM. Positions 85–242 constitute a CP-type G domain; it reads RQDAWKTKLI…LIDSPGLQEF (158 aa). Residues 135 to 138 and 184 to 192 contribute to the GTP site; these read NKAD and GQSGMGKST. 4 residues coordinate Zn(2+): C266, C271, H273, and C279.

The protein belongs to the TRAFAC class YlqF/YawG GTPase family. RsgA subfamily. As to quaternary structure, monomer. Associates with 30S ribosomal subunit, binds 16S rRNA. Zn(2+) is required as a cofactor.

The protein localises to the cytoplasm. One of several proteins that assist in the late maturation steps of the functional core of the 30S ribosomal subunit. Helps release RbfA from mature subunits. May play a role in the assembly of ribosomal proteins into the subunit. Circularly permuted GTPase that catalyzes slow GTP hydrolysis, GTPase activity is stimulated by the 30S ribosomal subunit. This Neisseria meningitidis serogroup C / serotype 2a (strain ATCC 700532 / DSM 15464 / FAM18) protein is Small ribosomal subunit biogenesis GTPase RsgA.